Reading from the N-terminus, the 345-residue chain is Arginine N-succinyltransferase (345 aa).

Residue L125 coordinates succinyl-CoA. The active-site Proton donor is H229.

Belongs to the arginine N-succinyltransferase family.

The enzyme catalyses succinyl-CoA + L-arginine = N(2)-succinyl-L-arginine + CoA + H(+). Its pathway is amino-acid degradation; L-arginine degradation via AST pathway; L-glutamate and succinate from L-arginine: step 1/5. Its function is as follows. Catalyzes the transfer of succinyl-CoA to arginine to produce N(2)-succinylarginine. The polypeptide is Arginine N-succinyltransferase (Yersinia enterocolitica serotype O:8 / biotype 1B (strain NCTC 13174 / 8081)).